The chain runs to 141 residues: ATP synthase epsilon chain (141 aa).

It belongs to the ATPase epsilon chain family. As to quaternary structure, F-type ATPases have 2 components, CF(1) - the catalytic core - and CF(0) - the membrane proton channel. CF(1) has five subunits: alpha(3), beta(3), gamma(1), delta(1), epsilon(1). CF(0) has three main subunits: a, b and c.

It is found in the cell inner membrane. Functionally, produces ATP from ADP in the presence of a proton gradient across the membrane. The sequence is that of ATP synthase epsilon chain from Thioalkalivibrio sulfidiphilus (strain HL-EbGR7).